The chain runs to 432 residues: Adenylosuccinate synthetase (432 aa).

Residues 12-18 and 40-42 each bind GTP; these read GDEGKGK and GHT. Asp-13 (proton acceptor) is an active-site residue. The Mg(2+) site is built by Asp-13 and Gly-40. IMP-binding positions include 13–16, 38–41, Thr-131, Arg-145, Gln-226, Thr-241, and Arg-305; these read DEGK and NAGH. His-41 serves as the catalytic Proton donor. Residue 301-307 participates in substrate binding; it reads ATTGRPR. Residues Arg-307, 333-335, and 415-417 contribute to the GTP site; these read KLD and STG.

The protein belongs to the adenylosuccinate synthetase family. Homodimer. It depends on Mg(2+) as a cofactor.

The protein localises to the cytoplasm. It carries out the reaction IMP + L-aspartate + GTP = N(6)-(1,2-dicarboxyethyl)-AMP + GDP + phosphate + 2 H(+). The protein operates within purine metabolism; AMP biosynthesis via de novo pathway; AMP from IMP: step 1/2. Its function is as follows. Plays an important role in the de novo pathway of purine nucleotide biosynthesis. Catalyzes the first committed step in the biosynthesis of AMP from IMP. The sequence is that of Adenylosuccinate synthetase from Magnetococcus marinus (strain ATCC BAA-1437 / JCM 17883 / MC-1).